A 658-amino-acid chain; its full sequence is UvrABC system protein B (658 aa).

Residues Lys25 to Ile414 enclose the Helicase ATP-binding domain. Gly38–Thr45 contacts ATP. The Beta-hairpin motif lies at His91 to Ile114. A Helicase C-terminal domain is found at Gln433–Arg607. In terms of domain architecture, UVR spans Glu623 to Leu658.

It belongs to the UvrB family. Forms a heterotetramer with UvrA during the search for lesions. Interacts with UvrC in an incision complex.

Its subcellular location is the cytoplasm. Functionally, the UvrABC repair system catalyzes the recognition and processing of DNA lesions. A damage recognition complex composed of 2 UvrA and 2 UvrB subunits scans DNA for abnormalities. Upon binding of the UvrA(2)B(2) complex to a putative damaged site, the DNA wraps around one UvrB monomer. DNA wrap is dependent on ATP binding by UvrB and probably causes local melting of the DNA helix, facilitating insertion of UvrB beta-hairpin between the DNA strands. Then UvrB probes one DNA strand for the presence of a lesion. If a lesion is found the UvrA subunits dissociate and the UvrB-DNA preincision complex is formed. This complex is subsequently bound by UvrC and the second UvrB is released. If no lesion is found, the DNA wraps around the other UvrB subunit that will check the other stand for damage. This Helicobacter pylori (strain ATCC 700392 / 26695) (Campylobacter pylori) protein is UvrABC system protein B.